We begin with the raw amino-acid sequence, 59 residues long: Large ribosomal subunit protein uL30 (59 aa).

It belongs to the universal ribosomal protein uL30 family. As to quaternary structure, part of the 50S ribosomal subunit.

This Enterococcus faecalis (strain ATCC 700802 / V583) protein is Large ribosomal subunit protein uL30.